A 156-amino-acid chain; its full sequence is Oleosin Zm-I (156 aa).

Positions M1–Q30 are disordered. Position 2 is an N-acetylalanine (A2). Residues A2–K42 form a polar region. The span at A8–H25 shows a compositional bias: gly residues. The tract at residues A43–Y114 is hydrophobic. A run of 2 helical transmembrane segments spans residues G51 to A71 and G95 to K115.

This sequence belongs to the oleosin family. The N-terminus is blocked.

It is found in the lipid droplet. The protein resides in the membrane. May have a structural role to stabilize the lipid body during desiccation of the seed by preventing coalescence of the oil. Probably interacts with both lipid and phospholipid moieties of lipid bodies. May also provide recognition signals for specific lipase anchorage in lipolysis during seedling growth. This chain is Oleosin Zm-I (OLE16), found in Zea mays (Maize).